A 137-amino-acid chain; its full sequence is MIYIPKKIRYRKHHRGRLKGVASKGNNLFFASCGLQALESSWITSQQMEAARRACTRKVKRHGKLFMRFFPDKPVTYRSAETRMGSGKGTPRDWVAVIKPGKILYELKGIPEPLARKALKLASAKLPLKTKFIFKKE.

This sequence belongs to the universal ribosomal protein uL16 family. In terms of assembly, part of the 50S ribosomal subunit.

Its subcellular location is the plastid. The polypeptide is Large ribosomal subunit protein uL16c (rpl16) (Helicosporidium sp. subsp. Simulium jonesii (Green alga)).